Consider the following 181-residue polypeptide: Crustacyanin-C1 subunit (181 aa).

3 cysteine pairs are disulfide-bonded: Cys-12–Cys-121, Cys-51–Cys-173, and Cys-117–Cys-150.

It belongs to the calycin superfamily. Lipocalin family. Oligomer; Can form dimers (beta-crustacyanin); or complexes of 16 subunits (alpha-crustacyanin). There are five types of subunits: A1, A2, A3, C1 and C2. As to expression, found in the carapace.

It localises to the secreted. The protein localises to the extracellular space. Functionally, binds the carotenoid astaxanthin (AXT) which provides the blue coloration to the carapace of the lobster. This chain is Crustacyanin-C1 subunit, found in Homarus gammarus (European lobster).